A 631-amino-acid polypeptide reads, in one-letter code: tRNA uridine 5-carboxymethylaminomethyl modification enzyme MnmG (631 aa).

An FAD-binding site is contributed by 15–20 (GAGHAG). Positions 203-232 (TPPRVDGNTVDYSKTQEEPGDKEPRHFSYT) are disordered. The span at 216–232 (KTQEEPGDKEPRHFSYT) shows a compositional bias: basic and acidic residues. 276–290 (GPRYCPSIEDKVVRF) contacts NAD(+).

It belongs to the MnmG family. Homodimer. Heterotetramer of two MnmE and two MnmG subunits. It depends on FAD as a cofactor.

It is found in the cytoplasm. In terms of biological role, NAD-binding protein involved in the addition of a carboxymethylaminomethyl (cmnm) group at the wobble position (U34) of certain tRNAs, forming tRNA-cmnm(5)s(2)U34. This Lactobacillus gasseri (strain ATCC 33323 / DSM 20243 / BCRC 14619 / CIP 102991 / JCM 1131 / KCTC 3163 / NCIMB 11718 / NCTC 13722 / AM63) protein is tRNA uridine 5-carboxymethylaminomethyl modification enzyme MnmG.